The chain runs to 126 residues: Aspartate 1-decarboxylase (126 aa).

Serine 25 acts as the Schiff-base intermediate with substrate; via pyruvic acid in catalysis. Serine 25 carries the post-translational modification Pyruvic acid (Ser). Position 57 (threonine 57) interacts with substrate. Catalysis depends on tyrosine 58, which acts as the Proton donor. 73-75 contributes to the substrate binding site; that stretch reads GAA.

Belongs to the PanD family. Heterooctamer of four alpha and four beta subunits. Requires pyruvate as cofactor. In terms of processing, is synthesized initially as an inactive proenzyme, which is activated by self-cleavage at a specific serine bond to produce a beta-subunit with a hydroxyl group at its C-terminus and an alpha-subunit with a pyruvoyl group at its N-terminus.

It localises to the cytoplasm. The catalysed reaction is L-aspartate + H(+) = beta-alanine + CO2. It participates in cofactor biosynthesis; (R)-pantothenate biosynthesis; beta-alanine from L-aspartate: step 1/1. In terms of biological role, catalyzes the pyruvoyl-dependent decarboxylation of aspartate to produce beta-alanine. The protein is Aspartate 1-decarboxylase of Alkalilimnicola ehrlichii (strain ATCC BAA-1101 / DSM 17681 / MLHE-1).